Here is a 72-residue protein sequence, read N- to C-terminus: Translation initiation factor IF-1 (72 aa).

The S1-like domain maps to 1–72 (MAKEETIQMQ…TRARITFRTK (72 aa)).

The protein belongs to the IF-1 family. As to quaternary structure, component of the 30S ribosomal translation pre-initiation complex which assembles on the 30S ribosome in the order IF-2 and IF-3, IF-1 and N-formylmethionyl-tRNA(fMet); mRNA recruitment can occur at any time during PIC assembly.

The protein resides in the cytoplasm. One of the essential components for the initiation of protein synthesis. Stabilizes the binding of IF-2 and IF-3 on the 30S subunit to which N-formylmethionyl-tRNA(fMet) subsequently binds. Helps modulate mRNA selection, yielding the 30S pre-initiation complex (PIC). Upon addition of the 50S ribosomal subunit IF-1, IF-2 and IF-3 are released leaving the mature 70S translation initiation complex. This is Translation initiation factor IF-1 from Nitrosomonas eutropha (strain DSM 101675 / C91 / Nm57).